Reading from the N-terminus, the 277-residue chain is Large ribosomal subunit protein uL2c (277 aa).

Residues 226–249 are disordered; that stretch reads NPIDHPHGGGEGRAPIGREKPLTP. Positions 229-246 are enriched in basic and acidic residues; it reads DHPHGGGEGRAPIGREKP.

The protein belongs to the universal ribosomal protein uL2 family. In terms of assembly, part of the 50S ribosomal subunit.

It localises to the plastid. The protein resides in the chloroplast. The protein is Large ribosomal subunit protein uL2c (rpl2) of Physcomitrium patens (Spreading-leaved earth moss).